Consider the following 232-residue polypeptide: 2,3-bisphosphoglycerate-dependent phosphoglycerate mutase (232 aa).

Substrate is bound by residues 10-17 (RHGESQWN), 23-24 (TG), R62, 89-92 (ERHY), K100, 116-117 (RR), and 186-187 (GN). H11 serves as the catalytic Tele-phosphohistidine intermediate. Residue E89 is the Proton donor/acceptor of the active site.

It belongs to the phosphoglycerate mutase family. BPG-dependent PGAM subfamily. In terms of assembly, homodimer.

It catalyses the reaction (2R)-2-phosphoglycerate = (2R)-3-phosphoglycerate. Its pathway is carbohydrate degradation; glycolysis; pyruvate from D-glyceraldehyde 3-phosphate: step 3/5. Catalyzes the interconversion of 2-phosphoglycerate and 3-phosphoglycerate. The protein is 2,3-bisphosphoglycerate-dependent phosphoglycerate mutase of Blochmanniella pennsylvanica (strain BPEN).